Reading from the N-terminus, the 141-residue chain is MESTSKFTYRGYTLEELRQMPIEKLAEIMPARQRRSLLRVFKQGTSEEHLKLLEKIRRAAKLASEGKKQPVIKTHLRDFIILPEMVGLTIHVHNGKEFVPVEITPEKIGHYLGEFALTTKKVEHGEPGLKATRSSMFVALK.

This sequence belongs to the universal ribosomal protein uS19 family.

Its function is as follows. Protein S19 forms a complex with S13 that binds strongly to the 16S ribosomal RNA. The chain is Small ribosomal subunit protein uS19 from Thermofilum pendens (strain DSM 2475 / Hrk 5).